The primary structure comprises 426 residues: Glucose-6-phosphate isomerase (426 aa).

Residue glutamate 282 is the Proton donor of the active site. Active-site residues include histidine 303 and lysine 417.

The protein belongs to the GPI family.

Its subcellular location is the cytoplasm. It carries out the reaction alpha-D-glucose 6-phosphate = beta-D-fructose 6-phosphate. Its pathway is carbohydrate biosynthesis; gluconeogenesis. It participates in carbohydrate degradation; glycolysis; D-glyceraldehyde 3-phosphate and glycerone phosphate from D-glucose: step 2/4. Functionally, catalyzes the reversible isomerization of glucose-6-phosphate to fructose-6-phosphate. In Onion yellows phytoplasma (strain OY-M), this protein is Glucose-6-phosphate isomerase.